The primary structure comprises 826 residues: Disintegrin and metalloproteinase domain-containing protein 8 (826 aa).

The first 16 residues, 1-16, serve as a signal peptide directing secretion; sequence MLGLWLLSVLWTPAVA. Residues 17 to 658 are Extracellular-facing; it reads PGPPLPHVKQ…VSDEQAASTS (642 aa). N-linked (GlcNAc...) asparagine glycosylation is found at N89 and N260. Residues 196–395 form the Peptidase M12B domain; sequence RYVELYVVAD…PQTGCLTNVP (200 aa). 12 disulfides stabilise this stretch: C305-C390, C346-C374, C348-C357, C430-C452, C443-C449, C461-C481, C468-C498, C493-C503, C563-C615, C615-C625, C619-C631, and C633-C642. Residue H329 coordinates Zn(2+). E330 is an active-site residue. 2 residues coordinate Zn(2+): H333 and H339. Residues 403-489 enclose the Disintegrin domain; the sequence is GPVCGNLFVE…TCPEDAFQQN (87 aa). N431 carries an N-linked (GlcNAc...) asparagine glycan. One can recognise an EGF-like domain in the interval 611–643; it reads RSENCSAKCNNHGVCNHKRECHCHKGWAPPNCV. An N-linked (GlcNAc...) asparagine glycan is attached at N614. The helical transmembrane segment at 659-683 threads the bilayer; it reads LPVSVVVVLVILVAAMVIVAGIVIY. Over 684-826 the chain is Cytoplasmic; it reads RKAPRQIQRR…VALKVPIQKR (143 aa). The disordered stretch occupies residues 701 to 826; the sequence is SGLSNPLFYT…VALKVPIQKR (126 aa). Positions 733–748 are enriched in pro residues; that stretch reads PPRPIVKPKRPPPAPP. Over residues 749 to 763 the composition is skewed to low complexity; the sequence is GAVSSSPLPVPVYAP.

As to quaternary structure, interacts with FST3. It depends on Zn(2+) as a cofactor. In terms of tissue distribution, macrophages.

Its subcellular location is the membrane. In terms of biological role, possible involvement in extravasation of leukocytes. This is Disintegrin and metalloproteinase domain-containing protein 8 (Adam8) from Mus musculus (Mouse).